Reading from the N-terminus, the 108-residue chain is Large ribosomal subunit protein bL31B (108 aa).

A disordered region spans residues 86 to 108 (KPETVVEDVLPKGKKKSPAKKKK). A compositionally biased stretch (basic residues) spans 97–108 (KGKKKSPAKKKK).

The protein belongs to the bacterial ribosomal protein bL31 family. Type B subfamily. As to quaternary structure, part of the 50S ribosomal subunit.

The sequence is that of Large ribosomal subunit protein bL31B from Chlamydia trachomatis serovar L2 (strain ATCC VR-902B / DSM 19102 / 434/Bu).